Reading from the N-terminus, the 945-residue chain is Leucine--tRNA ligase (945 aa).

The 'HIGH' region motif lies at 43–53; that stretch reads PYPNGAIHIGH. The 'KMSKS' region signature appears at 638-642; sequence KMSKS. Lys-641 lines the ATP pocket.

The protein belongs to the class-I aminoacyl-tRNA synthetase family.

The protein localises to the cytoplasm. It catalyses the reaction tRNA(Leu) + L-leucine + ATP = L-leucyl-tRNA(Leu) + AMP + diphosphate. This is Leucine--tRNA ligase from Pyrobaculum neutrophilum (strain DSM 2338 / JCM 9278 / NBRC 100436 / V24Sta) (Thermoproteus neutrophilus).